A 471-amino-acid polypeptide reads, in one-letter code: Ribulose bisphosphate carboxylase large chain (471 aa).

Residue K5 is modified to N6,N6,N6-trimethyllysine. Substrate contacts are provided by N114 and T164. The Proton acceptor role is filled by K166. K168 contacts substrate. Residues K192, D194, and E195 each coordinate Mg(2+). Residue K192 is modified to N6-carboxylysine. H285 functions as the Proton acceptor in the catalytic mechanism. R286, H318, and S370 together coordinate substrate.

The protein belongs to the RuBisCO large chain family. Type I subfamily. As to quaternary structure, heterohexadecamer of 8 large chains and 8 small chains; disulfide-linked. The disulfide link is formed within the large subunit homodimers. The cofactor is Mg(2+). The disulfide bond which can form in the large chain dimeric partners within the hexadecamer appears to be associated with oxidative stress and protein turnover.

The protein localises to the plastid. Its subcellular location is the chloroplast. It carries out the reaction 2 (2R)-3-phosphoglycerate + 2 H(+) = D-ribulose 1,5-bisphosphate + CO2 + H2O. The catalysed reaction is D-ribulose 1,5-bisphosphate + O2 = 2-phosphoglycolate + (2R)-3-phosphoglycerate + 2 H(+). RuBisCO catalyzes two reactions: the carboxylation of D-ribulose 1,5-bisphosphate, the primary event in carbon dioxide fixation, as well as the oxidative fragmentation of the pentose substrate in the photorespiration process. Both reactions occur simultaneously and in competition at the same active site. This Anthocleista grandiflora (Forest fever tree) protein is Ribulose bisphosphate carboxylase large chain.